A 220-amino-acid chain; its full sequence is Inner membrane-spanning protein YciB (220 aa).

The next 6 helical transmembrane spans lie at 20-40 (EVPP…FFFA), 57-77 (IGAP…IALA), 86-106 (LPIM…LTLW), 123-143 (LFGG…GYVF), 156-176 (KLTL…EIVW), and 187-207 (FKVW…MPLI).

It belongs to the YciB family.

The protein localises to the cell inner membrane. Functionally, plays a role in cell envelope biogenesis, maintenance of cell envelope integrity and membrane homeostasis. This Brucella abortus (strain S19) protein is Inner membrane-spanning protein YciB.